Consider the following 993-residue polypeptide: MKENNKILQLIYVAWRERWTDSQWGINIKKVLPRGVSGDVYNLADCLMQQALIGSTANPLVLNYLKHSLCAHLVSHAAVIRCIAKYDKLERVYCITALLEFLASIVDGVTCRIKSEEAVLPSSVVHLVYWLLQIFARTVQHYELYGEISAEQSYMLDQTCVVIDRLSQQQFLLSMLYVGCHEELEICGRIRDKYATIKGSLTNSNFTLNAPQVEQQLQQLAFIEAKHLEMQPLNPPSTLEKISCCVQPLLAVEVLLNPCKDTSYYVAELQMLQRLKKYSNTRLFYEIIRAGFLTLSNVADTSPDTMWGAFMFFKMPHIIKQLHALQRIPGEQPPPADYIPELVEALELLIEDNLLLDFMDTKCSCNMIEFLLNDWTKQQLVNDVHVKKFASQREAASQLLKKCDNGQQTPSNINFIKRAEVPLSGVLKTLCTNKVQDMVNVLCQVPVGNSFELILSVATVEGRLKTFVSRLIQCNENSKPVPGDLGKLCVIRSTLFDVSFLMLTSIVQTYGSDVVLSERGDSFFEKWVRECMVERNKLKNPRQILALCDDSIVDELLLSFSKPEASQLKPNNLSWQETCLNLPGVLHHVLIAWEQETLSSADVKSILDNIKRRLFSFSVCATSFLCAYMYSVKETELLKPLNMIQQFLAPLTSEELSSQENAKERLALSYQIIRKMQHDVHPAPSTKSRLISHSPLVEQFREVWRTVVDAGHLPVRAAQSLESLLLAGGAAWLSTQLVEQLLACKYTRDMSRTMDVVFAVMHLDIEKTTEALLQYVVAPLILRRQGEDINEPQSLVLARLCVYCIISCLESRKGNGTSALTAMKKRSRSHDDEELAANAAKVRKVIGDGSDNSSDFTDTTTGAGLAALLGSTSTSELRTTPLTLREPLQTSVQHIFAVFLQFVSGDELSPKAVFVYQFISLLVECGGERVAPVLRLLPNGLVQQLLKVLVTDDIKVGLISRLYDLRIQAGRLSAVSDLCLWRNMQMARHSIHL.

Phosphoserine occurs at positions 827 and 829.

Belongs to the Mediator complex subunit 24 family. Component of the Mediator complex, which includes at least CDK8, MED4, MED6, MED11, MED14, MED17, MED18, MED20, MED21, MED22, MED27, MED28, MED30 and MED31.

The protein resides in the nucleus. In terms of biological role, component of the Mediator complex, a coactivator involved in the regulated transcription of nearly all RNA polymerase II-dependent genes. Mediator functions as a bridge to convey information from gene-specific regulatory proteins to the basal RNA polymerase II transcription machinery. Mediator is recruited to promoters by direct interactions with regulatory proteins and serves as a scaffold for the assembly of a functional preinitiation complex with RNA polymerase II and the general transcription factors. Required for activated transcription of the MtnA, MtnB and MtnD genes. The protein is Mediator of RNA polymerase II transcription subunit 24 (MED24) of Drosophila melanogaster (Fruit fly).